A 340-amino-acid chain; its full sequence is Ketol-acid reductoisomerase (NADP(+)) (340 aa).

One can recognise a KARI N-terminal Rossmann domain in the interval 3–182 (VQMEYEKDVK…GAARVGLLET (180 aa)). NADP(+) contacts are provided by residues 26-29 (YGSQ), Arg49, Ser53, and 83-86 (DEIQ). Residue His108 is part of the active site. Gly134 is an NADP(+) binding site. The region spanning 183 to 328 (TYKEETEEDL…AELRKAMPFV (146 aa)) is the KARI C-terminal knotted domain. Mg(2+) is bound by residues Asp191, Glu195, Glu227, and Glu231. Ser252 is a binding site for substrate.

It belongs to the ketol-acid reductoisomerase family. Mg(2+) is required as a cofactor.

The catalysed reaction is (2R)-2,3-dihydroxy-3-methylbutanoate + NADP(+) = (2S)-2-acetolactate + NADPH + H(+). The enzyme catalyses (2R,3R)-2,3-dihydroxy-3-methylpentanoate + NADP(+) = (S)-2-ethyl-2-hydroxy-3-oxobutanoate + NADPH + H(+). It functions in the pathway amino-acid biosynthesis; L-isoleucine biosynthesis; L-isoleucine from 2-oxobutanoate: step 2/4. It participates in amino-acid biosynthesis; L-valine biosynthesis; L-valine from pyruvate: step 2/4. Involved in the biosynthesis of branched-chain amino acids (BCAA). Catalyzes an alkyl-migration followed by a ketol-acid reduction of (S)-2-acetolactate (S2AL) to yield (R)-2,3-dihydroxy-isovalerate. In the isomerase reaction, S2AL is rearranged via a Mg-dependent methyl migration to produce 3-hydroxy-3-methyl-2-ketobutyrate (HMKB). In the reductase reaction, this 2-ketoacid undergoes a metal-dependent reduction by NADPH to yield (R)-2,3-dihydroxy-isovalerate. The protein is Ketol-acid reductoisomerase (NADP(+)) of Streptococcus thermophilus (strain ATCC BAA-491 / LMD-9).